A 233-amino-acid polypeptide reads, in one-letter code: Leucyl/phenylalanyl-tRNA--protein transferase (233 aa).

The protein belongs to the L/F-transferase family.

It is found in the cytoplasm. The catalysed reaction is N-terminal L-lysyl-[protein] + L-leucyl-tRNA(Leu) = N-terminal L-leucyl-L-lysyl-[protein] + tRNA(Leu) + H(+). It catalyses the reaction N-terminal L-arginyl-[protein] + L-leucyl-tRNA(Leu) = N-terminal L-leucyl-L-arginyl-[protein] + tRNA(Leu) + H(+). It carries out the reaction L-phenylalanyl-tRNA(Phe) + an N-terminal L-alpha-aminoacyl-[protein] = an N-terminal L-phenylalanyl-L-alpha-aminoacyl-[protein] + tRNA(Phe). Functionally, functions in the N-end rule pathway of protein degradation where it conjugates Leu, Phe and, less efficiently, Met from aminoacyl-tRNAs to the N-termini of proteins containing an N-terminal arginine or lysine. In Klebsiella pneumoniae subsp. pneumoniae (strain ATCC 700721 / MGH 78578), this protein is Leucyl/phenylalanyl-tRNA--protein transferase.